The following is a 303-amino-acid chain: Signal recognition particle receptor FtsY (303 aa).

GTP-binding positions include 108-115 (GVNGAGKT), 190-194 (DTAGR), and 254-257 (TKLD).

Belongs to the GTP-binding SRP family. FtsY subfamily. As to quaternary structure, part of the signal recognition particle protein translocation system, which is composed of SRP and FtsY. SRP is a ribonucleoprotein composed of Ffh and a 4.5S RNA molecule.

Its subcellular location is the cell inner membrane. It is found in the cytoplasm. It catalyses the reaction GTP + H2O = GDP + phosphate + H(+). Involved in targeting and insertion of nascent membrane proteins into the cytoplasmic membrane. Acts as a receptor for the complex formed by the signal recognition particle (SRP) and the ribosome-nascent chain (RNC). Interaction with SRP-RNC leads to the transfer of the RNC complex to the Sec translocase for insertion into the membrane, the hydrolysis of GTP by both Ffh and FtsY, and the dissociation of the SRP-FtsY complex into the individual components. This is Signal recognition particle receptor FtsY from Rickettsia conorii (strain ATCC VR-613 / Malish 7).